Reading from the N-terminus, the 131-residue chain is MFANIGWWEMLVLVMVGLVVLGPERLPGAIRWAASALRQARDYLSGVTSQLREDIGPEFDDLRGHLGELQKLRGMTPRAALTKHLLDGDDSLFTGDFDRPTPKKPDAAGSAGPDATEQIGAGPIPFDSDAT.

A helical membrane pass occupies residues 2–22 (FANIGWWEMLVLVMVGLVVLG). The tract at residues 90–131 (DSLFTGDFDRPTPKKPDAAGSAGPDATEQIGAGPIPFDSDAT) is disordered. Positions 96 to 106 (DFDRPTPKKPD) are enriched in basic and acidic residues.

It belongs to the TatB family. The Tat system comprises two distinct complexes: a TatABC complex, containing multiple copies of TatA, TatB and TatC subunits, and a separate TatA complex, containing only TatA subunits. Substrates initially bind to the TatABC complex, which probably triggers association of the separate TatA complex to form the active translocon.

Its subcellular location is the cell membrane. Its function is as follows. Part of the twin-arginine translocation (Tat) system that transports large folded proteins containing a characteristic twin-arginine motif in their signal peptide across membranes. Together with TatC, TatB is part of a receptor directly interacting with Tat signal peptides. TatB may form an oligomeric binding site that transiently accommodates folded Tat precursor proteins before their translocation. In Mycobacterium tuberculosis (strain ATCC 25177 / H37Ra), this protein is Sec-independent protein translocase protein TatB.